The following is a 617-amino-acid chain: UvrABC system protein C (617 aa).

Residues 11-85 (TTPGVYIFRK…IKQHRPHYNV (75 aa)) form the GIY-YIG domain. The 36-residue stretch at 194–229 (APVIARLKEDMKVAAQGQDFEQAARLRDRVQAVEKL) folds into the UVR domain.

The protein belongs to the UvrC family. Interacts with UvrB in an incision complex.

It localises to the cytoplasm. Functionally, the UvrABC repair system catalyzes the recognition and processing of DNA lesions. UvrC both incises the 5' and 3' sides of the lesion. The N-terminal half is responsible for the 3' incision and the C-terminal half is responsible for the 5' incision. The chain is UvrABC system protein C from Deinococcus radiodurans (strain ATCC 13939 / DSM 20539 / JCM 16871 / CCUG 27074 / LMG 4051 / NBRC 15346 / NCIMB 9279 / VKM B-1422 / R1).